Here is a 217-residue protein sequence, read N- to C-terminus: Homeobox protein Hox-B7 (217 aa).

The Antp-type hexapeptide signature appears at 126–131; that stretch reads IYPWMR. Positions 137 to 196 form a DNA-binding region, homeobox; the sequence is RKRGRQTYTRYQTLELEKEFHYNRYLTRRRRIEIAHTLCLTERQIKIWFQNRRMKWKKEN. The interval 194-217 is disordered; it reads KENKTAGPGTTGQDRAEAEEEEEE.

Belongs to the Antp homeobox family. As to quaternary structure, forms a DNA-binding heterodimer with transcription factor PBX1.

The protein resides in the nucleus. Functionally, sequence-specific transcription factor which is part of a developmental regulatory system that provides cells with specific positional identities on the anterior-posterior axis. The chain is Homeobox protein Hox-B7 (HOXB7) from Homo sapiens (Human).